Consider the following 258-residue polypeptide: tRNA pseudouridine synthase A (258 aa).

The Nucleophile role is filled by aspartate 61. Tyrosine 119 serves as a coordination point for substrate.

This sequence belongs to the tRNA pseudouridine synthase TruA family. In terms of assembly, homodimer.

The catalysed reaction is uridine(38/39/40) in tRNA = pseudouridine(38/39/40) in tRNA. Formation of pseudouridine at positions 38, 39 and 40 in the anticodon stem and loop of transfer RNAs. In Chlorobium phaeobacteroides (strain DSM 266 / SMG 266 / 2430), this protein is tRNA pseudouridine synthase A.